Reading from the N-terminus, the 273-residue chain is Diaminopimelate epimerase (273 aa).

Residues Asn-11 and Asn-60 each coordinate substrate. Catalysis depends on Cys-69, which acts as the Proton donor. Substrate contacts are provided by residues 70 to 71, Asn-181, and 199 to 200; these read GN and ER. Cys-209 (proton acceptor) is an active-site residue. 210–211 is a substrate binding site; that stretch reads GT.

This sequence belongs to the diaminopimelate epimerase family. Homodimer.

It localises to the cytoplasm. The catalysed reaction is (2S,6S)-2,6-diaminopimelate = meso-2,6-diaminopimelate. The protein operates within amino-acid biosynthesis; L-lysine biosynthesis via DAP pathway; DL-2,6-diaminopimelate from LL-2,6-diaminopimelate: step 1/1. In terms of biological role, catalyzes the stereoinversion of LL-2,6-diaminopimelate (L,L-DAP) to meso-diaminopimelate (meso-DAP), a precursor of L-lysine and an essential component of the bacterial peptidoglycan. The sequence is that of Diaminopimelate epimerase from Helicobacter pylori (strain ATCC 700392 / 26695) (Campylobacter pylori).